The primary structure comprises 61 residues: MAKKALVNKANKKPKFKVRGYTRCNRCGRPHAVFRKFGLCRICLREMAHAGELPGVQKSSW.

Zn(2+) is bound by residues Cys24, Cys27, Cys40, and Cys43.

It belongs to the universal ribosomal protein uS14 family. Zinc-binding uS14 subfamily. In terms of assembly, part of the 30S ribosomal subunit. Contacts proteins S3 and S10. Requires Zn(2+) as cofactor.

Binds 16S rRNA, required for the assembly of 30S particles and may also be responsible for determining the conformation of the 16S rRNA at the A site. This chain is Small ribosomal subunit protein uS14B, found in Mycolicibacterium gilvum (strain PYR-GCK) (Mycobacterium gilvum (strain PYR-GCK)).